Reading from the N-terminus, the 266-residue chain is Hydroxyethylthiazole kinase (266 aa).

Position 46 (Met46) interacts with substrate. Residues Lys122 and Thr166 each coordinate ATP. Residue Gly193 participates in substrate binding.

It belongs to the Thz kinase family. The cofactor is Mg(2+).

It catalyses the reaction 5-(2-hydroxyethyl)-4-methylthiazole + ATP = 4-methyl-5-(2-phosphooxyethyl)-thiazole + ADP + H(+). It functions in the pathway cofactor biosynthesis; thiamine diphosphate biosynthesis; 4-methyl-5-(2-phosphoethyl)-thiazole from 5-(2-hydroxyethyl)-4-methylthiazole: step 1/1. In terms of biological role, catalyzes the phosphorylation of the hydroxyl group of 4-methyl-5-beta-hydroxyethylthiazole (THZ). The chain is Hydroxyethylthiazole kinase from Caldivirga maquilingensis (strain ATCC 700844 / DSM 13496 / JCM 10307 / IC-167).